A 64-amino-acid polypeptide reads, in one-letter code: Prokaryotic ubiquitin-like protein Pup (64 aa).

Basic and acidic residues-rich tracts occupy residues 1 to 11 (MAQEQTKRTGG) and 25 to 34 (GQERREKLAE). Positions 1-38 (MAQEQTKRTGGGDEDEGSAGPEAAGQERREKLAEDTDD) are disordered. An ARC ATPase binding region spans residues 21 to 58 (PEAAGQERREKLAEDTDDLLDEIDDVLEENAEDFVRAY). Positions 24–52 (AGQERREKLAEDTDDLLDEIDDVLEENAE) form a coiled coil. Glutamine 64 bears the Deamidated glutamine mark. Residue glutamine 64 forms an Isoglutamyl lysine isopeptide (Gln-Lys) (interchain with K-? in acceptor proteins) linkage.

This sequence belongs to the prokaryotic ubiquitin-like protein family. In terms of assembly, strongly interacts with the proteasome-associated ATPase ARC through a hydrophobic interface; the interacting region of Pup lies in its C-terminal half. There is one Pup binding site per ARC hexamer ring. Is modified by deamidation of its C-terminal glutamine to glutamate by the deamidase Dop, a prerequisite to the subsequent pupylation process.

The protein operates within protein degradation; proteasomal Pup-dependent pathway. Protein modifier that is covalently attached to lysine residues of substrate proteins, thereby targeting them for proteasomal degradation. The tagging system is termed pupylation. This is Prokaryotic ubiquitin-like protein Pup from Nocardia farcinica (strain IFM 10152).